A 343-amino-acid chain; its full sequence is Sulfate/thiosulfate import ATP-binding protein CysA (343 aa).

Residues Ile3–Val237 enclose the ABC transporter domain. Residue Gly35 to Thr42 coordinates ATP.

The protein belongs to the ABC transporter superfamily. Sulfate/tungstate importer (TC 3.A.1.6) family. The complex is composed of two ATP-binding proteins (CysA), two transmembrane proteins (CysT and CysW) and a solute-binding protein (CysP).

It localises to the cell inner membrane. It carries out the reaction sulfate(out) + ATP + H2O = sulfate(in) + ADP + phosphate + H(+). The enzyme catalyses thiosulfate(out) + ATP + H2O = thiosulfate(in) + ADP + phosphate + H(+). In terms of biological role, part of the ABC transporter complex CysAWTP involved in sulfate/thiosulfate import. Responsible for energy coupling to the transport system. This is Sulfate/thiosulfate import ATP-binding protein CysA from Xanthomonas campestris pv. campestris (strain ATCC 33913 / DSM 3586 / NCPPB 528 / LMG 568 / P 25).